The following is a 130-amino-acid chain: Small ribosomal subunit protein uS8 (130 aa).

It belongs to the universal ribosomal protein uS8 family. As to quaternary structure, part of the 30S ribosomal subunit.

In terms of biological role, one of the primary rRNA binding proteins, it binds directly to 16S rRNA central domain where it helps coordinate assembly of the platform of the 30S subunit. The sequence is that of Small ribosomal subunit protein uS8 from Methanosarcina barkeri (strain Fusaro / DSM 804).